The chain runs to 266 residues: Vesicle-associated protein 4-1 (266 aa).

Positions 28-57 (STTSSSSTQNPNQNYRSRHGNRNTDISAVS) are disordered. In terms of domain architecture, MSP spans 76-199 (RLRLDPSSYL…VEQVLRVIFI (124 aa)). Residues 200–228 (DADRPSAALEKLKRQLDEAEAAVEARKKP) are a coiled coil. Residues 219 to 229 (EAAVEARKKPP) show a composition bias toward basic and acidic residues. The tract at residues 219–239 (EAAVEARKKPPPETGPRVVGE) is disordered. At Ser264 the chain carries Phosphoserine.

The protein belongs to the VAMP-associated protein (VAP) (TC 9.B.17) family.

May play a role in vesicle trafficking. The chain is Vesicle-associated protein 4-1 (PVA41) from Arabidopsis thaliana (Mouse-ear cress).